Reading from the N-terminus, the 161-residue chain is TM2 domain-containing protein DDB_G0278163 (161 aa).

Residues 1 to 24 are Cytoplasmic-facing; that stretch reads MGHHHHHHGGSGHHHHHHHHGSGH. Residues 25-45 form a helical membrane-spanning segment; that stretch reads YGGGAVLVTPIVTPVPVVYGS. The Extracellular portion of the chain corresponds to 46 to 54; it reads RSSSYCPKS. In terms of domain architecture, TM2 spans 52 to 100; the sequence is PKSMTVAYVLWFFFGILGFHRLYLGRVGTFFLYFFTAGVFGLGWLFDAF. Residues 55-75 form a helical membrane-spanning segment; that stretch reads MTVAYVLWFFFGILGFHRLYL. Topologically, residues 76–80 are cytoplasmic; it reads GRVGT. Residues 81 to 101 traverse the membrane as a helical segment; that stretch reads FFLYFFTAGVFGLGWLFDAFY. Residues 102 to 161 lie on the Extracellular side of the membrane; sequence THKMVKHYNECEFTKSCVGQSPPATIPIYQSEGAYPTYQQVPQQPPQFYQPQQQQPQYQP. The disordered stretch occupies residues 139–161; the sequence is YQQVPQQPPQFYQPQQQQPQYQP.

The protein belongs to the TM2 family.

The protein resides in the membrane. This chain is TM2 domain-containing protein DDB_G0278163, found in Dictyostelium discoideum (Social amoeba).